The chain runs to 1135 residues: Envelopment polyprotein (1135 aa).

The N-terminal stretch at 1–18 (MGIWKWLVMASLVWPVLT) is a signal peptide. Residues 19 to 485 (LRNVYDMKIE…VPGFHGWATA (467 aa)) are Lumenal-facing. Cystine bridges form between Cys29–Cys151, Cys63–Cys157, Cys109–Cys128, Cys133–Cys138, Cys175–Cys185, Cys210–Cys247, Cys234–Cys351, Cys376–Cys435, Cys380–Cys389, Cys405–Cys424, and Cys452–Cys475. Asn134 is a glycosylation site (N-linked (GlcNAc...) asparagine; by host). N-linked (GlcNAc...) asparagine; by host glycans are attached at residues Asn235 and Asn347. Asn399 carries an N-linked (GlcNAc...) asparagine; by host glycan. Residues 486 to 506 (ALLVTFCFGWVLIPAITFIIL) form a helical membrane-spanning segment. The Cytoplasmic segment spans residues 507–627 (TILKFIANIF…LNLFRYKSRC (121 aa)). A binding to the ribonucleoprotein region spans residues 516–533 (FHTSNQENRLKSVLRKIK). 2 CCHC-type zinc fingers span residues 545–565 (CDVCKYECETYKELKAHGVSC) and 570–591 (CPYCFTHCEPTEAAFQAHYKVC). 3 binding to the ribonucleoprotein regions span residues 588–605 (YKVCQVTHRFRDDLKKTV), 592–603 (QVTHRFRDDLKK), and 611–625 (TPGCYRTLNLFRYKS). Residues 611–634 (TPGCYRTLNLFRYKSRCYIFTMWI) form the ITAM domain. A YxxL motif is present at residues 615-618 (YRTL). Residues 628 to 648 (YIFTMWIFLLVLESILWAASA) form a helical membrane-spanning segment. Residues 649–1105 (SETPLTPVWN…EWISGIFSGN (457 aa)) are Lumenal-facing. Cystine bridges form between Cys735-Cys770, Cys739-Cys777, Cys751-Cys885, Cys765-Cys896, Cys780-Cys904, Cys806-Cys815, Cys823-Cys832, and Cys863-Cys867. The segment at 757–777 (YQYETSWGCNPSDCPGVGTGC) is fusion loop. Asn928 is a glycosylation site (N-linked (GlcNAc...) asparagine; by host). 5 cysteine pairs are disulfide-bonded: Cys970–Cys1000, Cys993–Cys1045, Cys1010–Cys1015, Cys1046–Cys1051, and Cys1085–Cys1089. Residues 1106 to 1126 (WIVLIVLCVFLLFSLVLLSIL) traverse the membrane as a helical segment. The segment at 1122–1135 (LLSILCPVRKHKKS) is binding to the ribonucleoprotein. Over 1127–1135 (CPVRKHKKS) the chain is Cytoplasmic.

This sequence belongs to the hantavirus envelope glycoprotein family. In terms of assembly, homodimer. Homotetramer; forms heterotetrameric Gn-Gc spikes in the pre-fusion conformation. Interacts (via C-terminus) with the nucleoprotein. Interacts with host TUFM; this interaction contributes to the virus-induced degradation of mitochondria by autophagy, which leads to degradation of host MAVS and inhibition of type I interferon (IFN) responses. Interacts with host MAP1LC3B; this interaction contributes to the virus-induced degradation of mitochondria by autophagy, which leads to degradation of host MAVS and inhibition of type I interferon (IFN) responses. As to quaternary structure, homodimer. Homotetramer; forms heterotetrameric Gn-Gc spikes in the pre-fusion conformation. Homotrimer; forms homotrimer in the post-fusion conformation at acidic pH. Interacts (via C-terminus) with the nucleoprotein. In terms of processing, envelope polyprotein precursor is quickly cleaved in vivo just after synthesis, presumably by host signal peptidase.

Its subcellular location is the virion membrane. The protein localises to the host cell surface. The protein resides in the host Golgi apparatus membrane. It is found in the host endoplasmic reticulum membrane. It localises to the host mitochondrion. Its function is as follows. Forms homotetramers with glycoprotein C at the surface of the virion. Attaches the virion to host cell receptors including integrin ITGAV/ITGB3. This attachment induces virion internalization predominantly through clathrin-dependent endocytosis. May also bind to host C1QBP for virus entry into the host cell. Mediates the assembly and budding of infectious virus particles through its interaction with the nucleocapsid protein and the viral genome. May dysregulate normal immune and endothelial cell responses through an ITAM motif. Translocates to mitochondria, binds to host TUFM and recruits MAP1LC3B. These interactions induce mitochondrial autophagy and therefore destruction of host MAVS leading to inhibition of type I interferon (IFN) responses. Concomitant breakdown of glycoprotein N is apparently prevented by the nucleoprotein that may inhibit Gn-stimulated autophagosome-lysosome fusion. Interacts with the viral genomic RNA. Functionally, forms homotetramers with glycoprotein N at the surface of the virion. Attaches the virion to host cell receptors including integrin ITGAV/ITGB3. This attachment induces virion internalization predominantly through clathrin-dependent endocytosis. May also bind to host C1QBP for virus entry into the host cell. Class II fusion protein that promotes fusion of viral membrane with host endosomal membrane after endocytosis of the virion. In Hantaan virus (strain Lee) (Lee virus), this protein is Envelopment polyprotein (GP).